The primary structure comprises 554 residues: Phospholipase B-like protein E (554 aa).

The N-terminal stretch at 1 to 19 (MKLFILLIVIVFLISNSYS) is a signal peptide. N-linked (GlcNAc...) asparagine glycosylation is found at N113, N140, N231, N302, N340, and N546.

It belongs to the phospholipase B-like family.

It localises to the secreted. Functionally, probable phospholipase. This is Phospholipase B-like protein E (plbE) from Dictyostelium discoideum (Social amoeba).